We begin with the raw amino-acid sequence, 1029 residues long: Kinesin-like protein KIF17 (1029 aa).

Residues 5-335 enclose the Kinesin motor domain; the sequence is AVKVVVRCRP…LRYANRAKNI (331 aa). 91-98 is a binding site for ATP; the sequence is GQTGSGKS. A coiled-coil region spans residues 346-462; it reads KDALLREYQE…EENLRKETEA (117 aa). Disordered regions lie at residues 523–569 and 647–673; these read ELPK…MPTE and VPAP…PPRP. Residues 532–551 are compositionally biased toward low complexity; it reads SEISLGSSESSSLEETSVSE. Over residues 657 to 673 the composition is skewed to basic and acidic residues; that stretch reads SDARPEAEAADDFPPRP. The stretch at 739–846 forms a coiled coil; sequence QQVLARLQLL…QLEKIDYLAT (108 aa). Disordered regions lie at residues 908 to 931 and 968 to 1029; these read AVST…EPNM and KSLT…SEPL.

The protein belongs to the TRAFAC class myosin-kinesin ATPase superfamily. Kinesin family. Homodimer. Interacts with APBA1 (via PDZ domain); the interaction is direct and is required for association of KIF17 with the cargo that is to be transported. Interacts with IFT B complex components IFT52 and IFT57. Interacts with IFT70B. Interacts with PIWIL1. Interacts with TBATA.

The protein localises to the cytoplasm. Its subcellular location is the cytoskeleton. It localises to the cell projection. It is found in the cilium. The protein resides in the dendrite. Functionally, dendrite-specific motor protein which, in association with the Apba1-containing complex (LIN-10-LIN-2-LIN-7 complex), transports vesicles containing N-methyl-D-aspartate (NMDA) receptor subunit NR2B along microtubules. The polypeptide is Kinesin-like protein KIF17 (KIF17) (Homo sapiens (Human)).